The following is a 402-amino-acid chain: MMQQVKRAFKYRFYPTDEQAAELSRTFGCVRLVYNKALEGRTRAWYGEQRRVSYVQSSAALTEWKKTEELAFLSEVSSVPLQQALRHLQTAFANFFAKRSKYPRYKSRKKSRASAEYTRSAFTWRNGQLTLAKTAEPLDIRWSRPLPEGAEPTTVTVSRDRAGRWFVSLLCEDTITPAPATTAAVGIDAGITSLVTLSTGEKITNPKHERRDRARLAKAQRDVSRKAKGSANRKKARRKVARVHARITDRRCDFLHKLSTRLVRENQTVVIEDLTVRNLLKNGKLARAISDAAWTELRSMLEYKCAWYGRELVVIDRWFPSSKLCGTCGTVRGKLPLNVREWTCDCGAVHDRDVNAARNILAAGLAASACGDGIRPQRESSRTGRSSVKQEPQRATAGIPRL.

Residue Asp188 is part of the active site. A disordered region spans residues 202 to 239; it reads KITNPKHERRDRARLAKAQRDVSRKAKGSANRKKARRK. Positions 204–225 are enriched in basic and acidic residues; that stretch reads TNPKHERRDRARLAKAQRDVSR. The span at 226-239 shows a compositional bias: basic residues; that stretch reads KAKGSANRKKARRK. Glu272 is a catalytic residue. Zn(2+)-binding residues include Cys325, Cys328, Cys344, and Cys346. Asp353 is an active-site residue. The tract at residues 373-402 is disordered; that stretch reads GIRPQRESSRTGRSSVKQEPQRATAGIPRL.

It in the N-terminal section; belongs to the transposase 2 family. The protein in the C-terminal section; belongs to the transposase 35 family.

In terms of biological role, an RNA-guided dsDNA endonuclease. When guided by an RNA derived from the right-end element of its insertion sequence element (IS), cleaves DNA downstream of the transposon-associated motif (TAM). Cleaves supercoiled and linear DNA in a staggered manner 15-21 bases from the TAM yielding 5'-overhangs. Binds reRNA, an approximately 150 nucleotide base sRNA derived from the 3' end of its own gene, the right end (RE) of the insertion sequence (IS) plus sequence downstream of the IS. This is Putative RNA-guided DNA endonuclease from Streptomyces pristinaespiralis.